A 570-amino-acid chain; its full sequence is Alpha-1,2-mannosyltransferase ALG9 (570 aa).

Residues 1 to 37 are disordered; it reads MDLTTTRQRRPLISDSSSSSSTKSYSKTDKPGRSNGG. Low complexity predominate over residues 14–25; sequence SDSSSSSSTKSY. The next 8 helical transmembrane spans lie at 129 to 149, 160 to 180, 208 to 228, 237 to 257, 297 to 317, 324 to 344, 349 to 369, and 381 to 401; these read AVRL…VVAL, YAVA…SFLP, VVGV…VVIY, AFIA…LVDY, FNNF…YPVI, ALLV…LQPH, FLYP…ENIP, and SLLV…ILCA. Asparagine 473 carries an N-linked (GlcNAc...) asparagine glycan.

It belongs to the glycosyltransferase 22 family.

Its subcellular location is the endoplasmic reticulum membrane. The enzyme catalyses an alpha-D-Man-(1-&gt;2)-alpha-D-Man-(1-&gt;2)-alpha-D-Man-(1-&gt;3)-[alpha-D-Man-(1-&gt;3)-alpha-D-Man-(1-&gt;6)]-beta-D-Man-(1-&gt;4)-beta-D-GlcNAc-(1-&gt;4)-alpha-D-GlcNAc-diphospho-di-trans,poly-cis-dolichol + a di-trans,poly-cis-dolichyl beta-D-mannosyl phosphate = an alpha-D-Man-(1-&gt;2)-alpha-D-Man-(1-&gt;2)-alpha-D-Man-(1-&gt;3)-[alpha-D-Man-(1-&gt;2)-alpha-D-Man-(1-&gt;3)-alpha-D-Man-(1-&gt;6)]-beta-D-Man-(1-&gt;4)-beta-D-GlcNAc-(1-&gt;4)-alpha-D-GlcNAc-diphospho-di-trans,poly-cis-dolichol + a di-trans,poly-cis-dolichyl phosphate + H(+). The catalysed reaction is an alpha-D-Man-(1-&gt;2)-alpha-D-Man-(1-&gt;2)-alpha-D-Man-(1-&gt;3)-[alpha-D-Man-(1-&gt;2)-alpha-D-Man-(1-&gt;3)-[alpha-D-Man-(1-&gt;6)]-alpha-D-Man-(1-&gt;6)]-beta-D-Man-(1-&gt;4)-beta-D-GlcNAc-(1-&gt;4)-alpha-D-GlcNAc-diphospho-di-trans,poly-cis-dolichol + a di-trans,poly-cis-dolichyl beta-D-mannosyl phosphate = an alpha-D-Man-(1-&gt;2)-alpha-D-Man-(1-&gt;2)-alpha-D-Man-(1-&gt;3)-[alpha-D-Man-(1-&gt;2)-alpha-D-Man-(1-&gt;3)-[alpha-D-Man-(1-&gt;2)-alpha-D-Man-(1-&gt;6)]-alpha-D-Man-(1-&gt;6)]-beta-D-Man-(1-&gt;4)-beta-D-GlcNAc-(1-&gt;4)-alpha-D-GlcNAc-diphospho-di-trans,poly-cis-dolichol + a di-trans,poly-cis-dolichyl phosphate + H(+). Its pathway is protein modification; protein glycosylation. Its function is as follows. Mannosyltransferase that operates in the biosynthetic pathway of dolichol-linked oligosaccharides, the glycan precursors employed in protein asparagine (N)-glycosylation. The assembly of dolichol-linked oligosaccharides begins on the cytosolic side of the endoplasmic reticulum membrane and finishes in its lumen. The sequential addition of sugars to dolichol pyrophosphate produces dolichol-linked oligosaccharides containing fourteen sugars, including two GlcNAcs, nine mannoses and three glucoses. Once assembled, the oligosaccharide is transferred from the lipid to nascent proteins by oligosaccharyltransferases. In the lumen of the endoplasmic reticulum, catalyzes the addition of the seventh and ninth alpha-1,2-linked mannose residues to Man(6)GlcNAc(2)-PP-dolichol and Man(8)GlcNAc(2)-PP-dolichol respectively. The chain is Alpha-1,2-mannosyltransferase ALG9 (ALG9) from Arabidopsis thaliana (Mouse-ear cress).